We begin with the raw amino-acid sequence, 448 residues long: MTDNNLFPEPKKIVWRVSELNRHVRVILEQTFPLLWVSGEISNLKRYPSGHWYFSLKDDNAQVRCVMFRHKNMYLDWMPQDGAQVEAQALITLYEARGEFQLTIERLRRAGLGVLFETFERLKTRLQQEGLFNPEYKQLIPPYPQQIGIITSTNTAALRDVLTTLQRRLPSLPVVIYPAPVQGKEAASAIVTALQIATQRSECDVLILCRGGGSIEDLWAFNEEIVARAIAACPIPIVTGIGHETDFTIADFVADMRAPTPTGAAQLAAPDRQDILHRLQYWQHRLQQAIERNIERRMQTTDLLAHRLVHPGERIRYQLIHLSQLHNRLLHAWSRQLEVCKWRIEAFRRRIQFTKPDINTGKRYQQELAARLQRAMVYRLESLQVQLIRQQQHLAHLDPKAVLERGYSITYTAGGEILQDSQQIHTGDNVQIVFAKGSAKANITETNK.

Belongs to the XseA family. In terms of assembly, heterooligomer composed of large and small subunits.

It localises to the cytoplasm. The enzyme catalyses Exonucleolytic cleavage in either 5'- to 3'- or 3'- to 5'-direction to yield nucleoside 5'-phosphates.. Its function is as follows. Bidirectionally degrades single-stranded DNA into large acid-insoluble oligonucleotides, which are then degraded further into small acid-soluble oligonucleotides. The sequence is that of Exodeoxyribonuclease 7 large subunit from Nitrosomonas eutropha (strain DSM 101675 / C91 / Nm57).